Reading from the N-terminus, the 147-residue chain is Transcriptional regulator MraZ (147 aa).

2 consecutive SpoVT-AbrB domains span residues 5–52 (SHAI…PETE) and 81–124 (ATTL…SEEA).

Belongs to the MraZ family. As to quaternary structure, forms oligomers.

Its subcellular location is the cytoplasm. The protein resides in the nucleoid. This Saccharophagus degradans (strain 2-40 / ATCC 43961 / DSM 17024) protein is Transcriptional regulator MraZ.